Here is a 1054-residue protein sequence, read N- to C-terminus: CCAAT/enhancer-binding protein zeta (1054 aa).

A compositionally biased stretch (basic and acidic residues) spans Met-1 to Glu-20. Disordered stretches follow at residues Met-1 to Leu-42 and Val-102 to Lys-160. A compositionally biased stretch (acidic residues) spans Ala-21–Ser-34. The segment covering Glu-109–Ile-120 has biased composition (basic and acidic residues). Ser-113 carries the post-translational modification Phosphoserine. Polar residues predominate over residues Asn-124–Lys-138. Position 629 is a phosphoserine (Ser-629). Position 695 is an N6-acetyllysine (Lys-695). Ser-835 is subject to Phosphoserine. Disordered stretches follow at residues Arg-873–Ser-902 and Asp-915–Asn-969. Composition is skewed to acidic residues over residues Leu-882–Ser-902 and Asp-915–Pro-933. Residues Ser-959, Ser-973, and Ser-978 each carry the phosphoserine modification. Residues Ile-1031 to Lys-1054 are disordered.

Belongs to the CBF/MAK21 family.

It is found in the nucleus. Stimulates transcription from the HSP70 promoter. The protein is CCAAT/enhancer-binding protein zeta (CEBPZ) of Homo sapiens (Human).